The primary structure comprises 509 residues: Bifunctional purine biosynthesis protein PurH (509 aa).

One can recognise an MGS-like domain in the interval 1 to 144; it reads MKRALISVSD…KNYAAVTVVV (144 aa).

This sequence belongs to the PurH family.

The catalysed reaction is (6R)-10-formyltetrahydrofolate + 5-amino-1-(5-phospho-beta-D-ribosyl)imidazole-4-carboxamide = 5-formamido-1-(5-phospho-D-ribosyl)imidazole-4-carboxamide + (6S)-5,6,7,8-tetrahydrofolate. It carries out the reaction IMP + H2O = 5-formamido-1-(5-phospho-D-ribosyl)imidazole-4-carboxamide. The protein operates within purine metabolism; IMP biosynthesis via de novo pathway; 5-formamido-1-(5-phospho-D-ribosyl)imidazole-4-carboxamide from 5-amino-1-(5-phospho-D-ribosyl)imidazole-4-carboxamide (10-formyl THF route): step 1/1. It functions in the pathway purine metabolism; IMP biosynthesis via de novo pathway; IMP from 5-formamido-1-(5-phospho-D-ribosyl)imidazole-4-carboxamide: step 1/1. The protein is Bifunctional purine biosynthesis protein PurH of Listeria welshimeri serovar 6b (strain ATCC 35897 / DSM 20650 / CCUG 15529 / CIP 8149 / NCTC 11857 / SLCC 5334 / V8).